The sequence spans 3680 residues: Dystrophin (3680 aa).

The actin-binding stretch occupies residues 1–237 (MLWWEEVEDC…ILMYITSLFQ (237 aa)). 2 Calponin-homology (CH) domains span residues 15-119 (DVQK…LHWQ) and 134-240 (TNSE…QVLP). The interval 63 to 72 (PKEKGSTRVH) is ANK2- and ANK-3 binding. The segment covering 310–323 (TSDPTRSPLPSQHL) has biased composition (polar residues). A disordered region spans residues 310-332 (TSDPTRSPLPSQHLETPEDKSFG). 24 Spectrin repeats span residues 340–448 (ANLD…NLHK), 449–557 (VLMD…LLQD), 560–668 (LKWQ…QISQ), 720–829 (EIRK…WLEY), 831–935 (NNII…ELQT), 944–1047 (RYQE…KLEE), 1050–1156 (AKLR…ALKG), 1159–1265 (DKTV…TLEE), 1268–1369 (ACWH…LLEQ), 1370–1465 (SIQS…LFQK), 1470–1570 (EQRL…QLEK), 1573–1678 (KLSR…LLLE), 1681–1780 (KHME…KASI), 1781–1876 (PLKE…KALE), 1879–1981 (HQWY…TVHE), 1994–2103 (EISY…RFDR), 2106–2210 (EKWR…RLEE), 2213–2320 (NILS…EIEA), 2321–2418 (HVKD…LRAK), 2470–2572 (FNRA…QLTE), 2575–2681 (KDST…ALEE), 2684–2797 (RLLQ…HLEA), 2803–2925 (KRLH…RKID), and 2930–3035 (RLQE…QLHE). The tract at residues 1418–1915 (DLTSHEISLE…PEPRDERKIK (498 aa)) is interaction with SYNM. Positions 3050 to 3083 (TSVQGPWERAISPNKVPYYINHETQTTCWDHPKM) constitute a WW domain. Positions 3053–3403 (QGPWERAISP…TVLEGDNMET (351 aa)) are interaction with SYNM. A ZZ-type; degenerate zinc finger spans residues 3303 to 3359 (KHQAKCNICKECPIIGFRYRSLKHFNYDICQSCFFSGRVAKGHKMHYPMVEYCTPTT). Zn(2+) contacts are provided by Cys3308, Cys3311, Cys3332, and Cys3335. The segment at 3461–3513 (DDEHLLIQHYWRSLNQESPLSQPRSPAQILISLESEERGELERILADLEGRNR) is binds to SNTB1. Residues Ser3478, Ser3485, and Ser3495 each carry the phosphoserine modification. Disordered regions lie at residues 3524–3549 (QQHEHKGLSPLPSPPEMMPTSPQSPR) and 3595–3680 (PQAE…EDTM). Polar residues-rich tracts occupy residues 3602 to 3621 (NGTTVSSPSTSLQRSDSSQP) and 3658 to 3668 (LNHSFPSSRGR). Phosphoserine is present on residues Ser3607, Ser3608, Ser3612, Ser3618, Ser3619, and Ser3661.

Interacts with SYNM. Interacts with the syntrophins SNTG1 and SNTG2. Interacts with KRT19. Component of the dystrophin-associated glycoprotein complex which is composed of three subcomplexes: a cytoplasmic complex comprised of DMD (or UTRN), DTNA and a number of syntrophins, such as SNTB1, SNTB2, SNTG1 and SNTG2, the transmembrane dystroglycan complex, and the sarcoglycan-sarcospan complex. Interacts with DAG1 (betaDAG1) with DMD; the interaction is inhibited by phosphorylation on the PPXY motif of DAG1. Interacts with SYNM; SNTA1 and SNTB1. Interacts with CMYA5. Directly interacts with ANK2 and ANK3; these interactions do not interfere with betaDAG1-binding and are necessary for proper localization in muscle cells. Identified in a dystroglycan complex that contains at least PRX, DRP2, UTRN, DMD and DAG1. Interacts with DTNB. Interacts with PGM5; the interaction is direct. Interacts with NOS1; localizes NOS1 to sarcolemma in muscle cells.

Its subcellular location is the cell membrane. It is found in the sarcolemma. It localises to the cytoplasm. The protein resides in the cytoskeleton. The protein localises to the postsynaptic cell membrane. Anchors the extracellular matrix to the cytoskeleton via F-actin. Ligand for dystroglycan. Component of the dystrophin-associated glycoprotein complex which accumulates at the neuromuscular junction (NMJ) and at a variety of synapses in the peripheral and central nervous systems and has a structural function in stabilizing the sarcolemma. Also implicated in signaling events and synaptic transmission. The sequence is that of Dystrophin (DMD) from Canis lupus familiaris (Dog).